The following is a 164-amino-acid chain: Transcription antitermination protein NusB (164 aa).

Belongs to the NusB family.

Functionally, involved in transcription antitermination. Required for transcription of ribosomal RNA (rRNA) genes. Binds specifically to the boxA antiterminator sequence of the ribosomal RNA (rrn) operons. The protein is Transcription antitermination protein NusB of Chlorobaculum parvum (strain DSM 263 / NCIMB 8327) (Chlorobium vibrioforme subsp. thiosulfatophilum).